Here is a 459-residue protein sequence, read N- to C-terminus: ERBB receptor feedback inhibitor 1 (459 aa).

Ser2 is modified (N-acetylserine). 2 positions are modified to phosphothreonine: Thr126 and Thr130. Residues 227–352 are disordered; the sequence is QNRVVPDPNP…VMPPTQSFAP (126 aa). Phosphoserine is present on residues Ser250 and Ser271. Over residues 264–273 the composition is skewed to polar residues; that stretch reads SSCTHRASPS. Positions 282-291 are enriched in pro residues; it reads PPRVPIPPRP. Ser300 carries the post-translational modification Phosphoserine. Residues 310–323 show a composition bias toward basic and acidic residues; the sequence is DEDRPPKVPPREPL. The segment covering 324–335 has biased composition (polar residues); that stretch reads SRSNSRTPSPKS. The segment at 332 to 361 is interaction with EGFR and ERBB2 and regulation of EGFR activation; it reads SPKSLPSYLNGVMPPTQSFAPDPKYVSSKA. Ser458 is subject to Phosphoserine.

This sequence belongs to the MIG6 family. As to quaternary structure, interacts with EGFR and ERBB2.

The protein resides in the cytoplasm. Its subcellular location is the cell membrane. It is found in the nucleus. Negative regulator of EGFR signaling in skin morphogenesis. Acts as a negative regulator for several EGFR family members, including ERBB2, ERBB3 and ERBB4. Inhibits EGFR catalytic activity by interfering with its dimerization. Inhibits autophosphorylation of EGFR, ERBB2 and ERBB4. Important for normal keratinocyte proliferation and differentiation. Plays a role in modulating the response to steroid hormones in the uterus. Required for normal response to progesterone in the uterus and for fertility. Mediates epithelial estrogen responses in the uterus by regulating ESR1 levels and activation. Important for regulation of endometrium cell proliferation. Important for normal prenatal and perinatal lung development. This chain is ERBB receptor feedback inhibitor 1 (Errfi1), found in Rattus norvegicus (Rat).